We begin with the raw amino-acid sequence, 186 residues long: Putative manganese efflux pump MntP (186 aa).

6 helical membrane-spanning segments follow: residues 5–25 (VLIG…MDAF), 41–61 (VFQI…GGMI), 72–92 (ALAG…MIVA), 107–127 (FGLF…GLSL), 135–155 (ILTI…GLLL), and 166–186 (YSEA…LLPI).

Belongs to the MntP (TC 9.B.29) family.

Its subcellular location is the cell membrane. Its function is as follows. Probably functions as a manganese efflux pump. The protein is Putative manganese efflux pump MntP of Bacillus licheniformis (strain ATCC 14580 / DSM 13 / JCM 2505 / CCUG 7422 / NBRC 12200 / NCIMB 9375 / NCTC 10341 / NRRL NRS-1264 / Gibson 46).